The chain runs to 626 residues: tRNA uridine 5-carboxymethylaminomethyl modification enzyme MnmG (626 aa).

13–18 (GGGHAG) lines the FAD pocket. An NAD(+)-binding site is contributed by 273–287 (GPRYCPSIEDKIHRF).

It belongs to the MnmG family. In terms of assembly, homodimer. Heterotetramer of two MnmE and two MnmG subunits. It depends on FAD as a cofactor.

It localises to the cytoplasm. In terms of biological role, NAD-binding protein involved in the addition of a carboxymethylaminomethyl (cmnm) group at the wobble position (U34) of certain tRNAs, forming tRNA-cmnm(5)s(2)U34. This chain is tRNA uridine 5-carboxymethylaminomethyl modification enzyme MnmG, found in Acinetobacter baumannii (strain ACICU).